We begin with the raw amino-acid sequence, 672 residues long: MMPPNEQESSFPKTPSANRHETSPVQENRFSSPSHVNPCLDDDNDHDGPSHQSRQSSVLRQSLRPIILKFEELTYSIKSQTGKGSYWFGSQEPKPNRLVLKCVSGIVKPGELLAMLGPSGSGKTTLVTALAGRLQGKLSGTVSYNGEPFTSSVKRKTGFVTQDDVLYPHLTVMETLTYTALLRLPKELTRKEKLEQVEMVVSDLGLTRCCNSVIGGGLIRGISGGERKRVSIGQEMLVNPSLLLLDEPTSGLDSTTAARIVATLRSLARGGRTVVTTIHQPSSRLYRMFDKVLVLSEGCPIYSGDSGRVMEYFGSIGYQPGSSFVNPADFVLDLANGITSDTKQYDQIETNGRLDRLEEQNSVKQSLISSYKKNLYPPLKEEVSRTFPQDQTNARLRKKAITNRWPTSWWMQFSVLLKRGLKERSHESFSGLRIFMVMSVSLLSGLLWWHSRVAHLQDQVGLLFFFSIFWGFFPLFNAIFTFPQERPMLIKERSSGIYRLSSYYIARTVGDLPMELILPTIFVTITYWMGGLKPSLTTFIMTLMIVLYNVLVAQGVGLALGAILMDAKKAATLSSVLMLVFLLAGGYYIQHIPGFIAWLKYVSFSHYCYKLLVGVQYTWDEVYECGSGLHCSVMDYEGIKNLRIGNMMWDVLALAVMLLLYRVLAYLALRNL.

Over residues M1–H35 the composition is skewed to polar residues. Positions M1–L59 are disordered. The segment covering S50–L59 has biased composition (low complexity). The ABC transporter domain occupies L68–S322. Residue G117–T124 participates in ATP binding. An ABC transmembrane type-2 domain is found at M411–Y617. The next 6 helical transmembrane spans lie at F429–W449, V460–F480, L512–L532, L543–I563, V576–I596, and W649–L669.

Belongs to the ABC transporter superfamily. ABCG family. Eye pigment precursor importer (TC 3.A.1.204) subfamily.

The protein resides in the membrane. The chain is ABC transporter G family member 21 (ABCG21) from Arabidopsis thaliana (Mouse-ear cress).